A 269-amino-acid chain; its full sequence is Phosphate import ATP-binding protein PstB (269 aa).

Positions 23–264 constitute an ABC transporter domain; the sequence is IATRNLEFYY…PSKQQTEDYI (242 aa). 55–62 contributes to the ATP binding site; the sequence is GPSGCGKS.

The protein belongs to the ABC transporter superfamily. Phosphate importer (TC 3.A.1.7) family. The complex is composed of two ATP-binding proteins (PstB), two transmembrane proteins (PstC and PstA) and a solute-binding protein (PstS).

It is found in the cell inner membrane. It catalyses the reaction phosphate(out) + ATP + H2O = ADP + 2 phosphate(in) + H(+). Part of the ABC transporter complex PstSACB involved in phosphate import. Responsible for energy coupling to the transport system. The protein is Phosphate import ATP-binding protein PstB of Xylella fastidiosa (strain Temecula1 / ATCC 700964).